The primary structure comprises 284 residues: Diaminopimelate epimerase (284 aa).

The substrate site is built by asparagine 14 and asparagine 67. Cysteine 76 functions as the Proton donor in the catalytic mechanism. Residues 77–78, asparagine 166, asparagine 199, and 217–218 each bind substrate; these read GN and ER. Cysteine 226 acts as the Proton acceptor in catalysis. 227 to 228 is a substrate binding site; the sequence is GT.

It belongs to the diaminopimelate epimerase family. Homodimer.

It is found in the cytoplasm. The enzyme catalyses (2S,6S)-2,6-diaminopimelate = meso-2,6-diaminopimelate. Its pathway is amino-acid biosynthesis; L-lysine biosynthesis via DAP pathway; DL-2,6-diaminopimelate from LL-2,6-diaminopimelate: step 1/1. In terms of biological role, catalyzes the stereoinversion of LL-2,6-diaminopimelate (L,L-DAP) to meso-diaminopimelate (meso-DAP), a precursor of L-lysine and an essential component of the bacterial peptidoglycan. The protein is Diaminopimelate epimerase of Bacillus pumilus (strain SAFR-032).